The sequence spans 377 residues: Homoserine O-succinyltransferase (377 aa).

The AB hydrolase-1 domain maps to 50–359 (NAVLVCHALS…SSHGHDSFLM (310 aa)). The active-site Nucleophile is the Ser156. Substrate is bound at residue Arg226. Active-site residues include Asp321 and His354. Asp355 contributes to the substrate binding site.

The protein belongs to the AB hydrolase superfamily. MetX family. Homodimer.

It localises to the cytoplasm. The enzyme catalyses L-homoserine + succinyl-CoA = O-succinyl-L-homoserine + CoA. The protein operates within amino-acid biosynthesis; L-methionine biosynthesis via de novo pathway; O-succinyl-L-homoserine from L-homoserine: step 1/1. Transfers a succinyl group from succinyl-CoA to L-homoserine, forming succinyl-L-homoserine. This is Homoserine O-succinyltransferase from Nitrosospira multiformis (strain ATCC 25196 / NCIMB 11849 / C 71).